The following is a 91-amino-acid chain: Large ribosomal subunit protein eL34 (91 aa).

This sequence belongs to the eukaryotic ribosomal protein eL34 family.

This is Large ribosomal subunit protein eL34 from Thermofilum pendens (strain DSM 2475 / Hrk 5).